A 222-amino-acid polypeptide reads, in one-letter code: Ribosome maturation factor RimM (222 aa).

The disordered stretch occupies residues M1–E22. Residues E145–Y222 enclose the PRC barrel domain.

This sequence belongs to the RimM family. Binds ribosomal protein uS19.

It is found in the cytoplasm. Its function is as follows. An accessory protein needed during the final step in the assembly of 30S ribosomal subunit, possibly for assembly of the head region. Essential for efficient processing of 16S rRNA. May be needed both before and after RbfA during the maturation of 16S rRNA. It has affinity for free ribosomal 30S subunits but not for 70S ribosomes. This is Ribosome maturation factor RimM from Cupriavidus necator (strain ATCC 17699 / DSM 428 / KCTC 22496 / NCIMB 10442 / H16 / Stanier 337) (Ralstonia eutropha).